A 379-amino-acid polypeptide reads, in one-letter code: ATP-sensitive inward rectifier potassium channel 10 (379 aa).

Residues 1–61 (MTSVAKVYYS…LKDLWTTFID (61 aa)) lie on the Cytoplasmic side of the membrane. Residue Arg36 coordinates 1,2-dioctanoyl-sn-glycero-3-phospho-(1D-myo-inositol-4,5-bisphosphate). A helical membrane pass occupies residues 62-88 (MQWRYKLLLFSATFAGTWFLFGVVWYL). Residues 89–114 (VAVAHGDLLELDPPANHTPCVVQVHT) lie on the Extracellular side of the membrane. Cys108 and Cys140 form a disulfide bridge. Residues 115 to 131 (LTGAFLFSLESQTTIGY) constitute an intramembrane region (discontinuously helical; Pore-forming). Positions 128–133 (TIGYGF) match the Selectivity filter motif. Topologically, residues 132-140 (GFRYISEEC) are extracellular. Residues 141–166 (PLAIVLLIAQLVLTTILEIFITGTFL) form a helical membrane-spanning segment. Topologically, residues 167-379 (AKIARPKKRA…SALSVRISNV (213 aa)) are cytoplasmic. Positions 168, 171, and 173 each coordinate 1,2-dioctanoyl-sn-glycero-3-phospho-(1D-myo-inositol-4,5-bisphosphate). 210-217 (GCQVTGKL) is an ATP binding site.

Belongs to the inward rectifier-type potassium channel (TC 1.A.2.1) family. KCNJ10 subfamily. Homotetramer. In kidney cells, it forms heteromeric channels with Kir5.1/KCNJ16; this interaction is required for KCNJ16 localization to the basolateral membrane. Interacts with MAGI1, alone and possibly as a heteromer with KCNJ16; this interaction may facilitate KCNJ10/KCNJ16 potassium channel expression at the basolateral membrane in kidney cells. Interacts with PATJ. Expressed in kidney (at protein level). In the nephron, expressed in the distal convoluted tubule, the connecting tubule, the collecting duct and cortical thick ascending limbs.

Its subcellular location is the membrane. It is found in the basolateral cell membrane. The catalysed reaction is K(+)(in) = K(+)(out). Channel activity is strongly regulated by variations of cytosolic pH; channels are activated by alkaline and inhibited by acidic pH values. Inhibited by Ba(2+) and Cs(+). Activated by phosphatidylinositol 4,5 biphosphate (PtdIns(4,5)P2). Functionally, may be responsible for potassium buffering action of glial cells in the brain. Inward rectifier potassium channels are characterized by a greater tendency to allow potassium to flow into the cell rather than out of it. Their voltage dependence is regulated by the concentration of extracellular potassium; as external potassium is raised, the voltage range of the channel opening shifts to more positive voltages. The inward rectification is mainly due to the blockage of outward current by internal magnesium. Can be blocked by extracellular barium and cesium. In the kidney, together with KCNJ16, mediates basolateral K(+) recycling in distal tubules; this process is critical for Na(+) reabsorption at the tubules. This Homo sapiens (Human) protein is ATP-sensitive inward rectifier potassium channel 10.